The following is a 1174-amino-acid chain: Male determiner protein Mdmd(Y) (1174 aa).

Positions 1-15 are enriched in basic and acidic residues; it reads MNATDAESRKPENKP. Disordered regions lie at residues 1-51, 79-109, and 136-259; these read MNAT…SGQR, RKDG…HPVE, and KQLS…LRRS. The span at 16-35 shows a compositional bias: low complexity; the sequence is SSESSSSGSTSGSSDGEVSS. The segment covering 36-47 has biased composition (polar residues); the sequence is KTYFKNNKSKVL. The segment covering 79 to 92 has biased composition (basic and acidic residues); sequence RKDGSNEMLPKEDS. Low complexity predominate over residues 138 to 153; the sequence is LSAYRSRSRSTRLSYS. Residues 167–180 are compositionally biased toward basic residues; sequence SRYKKSVLRNRRTS. Over residues 183-200 the composition is skewed to basic and acidic residues; the sequence is HGRDSSTTKRSVSRDKDN. Over residues 201 to 223 the composition is skewed to basic residues; it reads RLRRRIGSSRSHTRSHSRFRRSE. Positions 235 to 259 are enriched in basic and acidic residues; sequence RSQERRHERRRSMSSDYERIALRRS. The MIF4G domain occupies 348–531; the sequence is KKYIHGYINK…KVLFQVRRDG (184 aa). Residues 597–608 are compositionally biased toward low complexity; it reads DSDGSFGSGSNS. A disordered region spans residues 597–616; that stretch reads DSDGSFGSGSNSETALSDCD. Positions 641-757 constitute an MI domain; that stretch reads ALRRTIYLTL…SWDVLDCIKL (117 aa). Residues 840–857 show a composition bias toward low complexity; the sequence is SAPSSSSSSSLSSELSAP. 2 disordered regions span residues 840–1045 and 1089–1135; these read SAPS…SRTK and KGGP…SREY. 2 stretches are compositionally biased toward basic residues: residues 869–886 and 895–909; these read KKKH…KNPS and IVGK…KTIK. The span at 910–924 shows a compositional bias: basic and acidic residues; it reads RRTDKDNSSSKDNFL. Low complexity predominate over residues 926–957; it reads SESSSNESISLDSLSSELFAPSSYSSSESSND. The segment covering 963–1001 has biased composition (basic residues); that stretch reads KHKGKNKKMTKKKNPSNKREKTKKKLSKNKKAPNKNTKK. Over residues 1010–1020 the composition is skewed to low complexity; that stretch reads SSESSISESKS. Residues 1034-1045 show a composition bias toward basic residues; that stretch reads RKKRVTSKSRTK. Residues 1089 to 1118 show a composition bias toward basic and acidic residues; sequence KGGPNCRKDNYGNRQNHEISQRHDSEIKRR. Residues 1119 to 1130 show a composition bias toward basic residues; the sequence is REERKKRHHEKN.

Belongs to the CWC22 family. In terms of assembly, component of the spliceosome C complex.

The protein localises to the nucleus speckle. Its function is as follows. Male determiner protein (M-factor) that controls male somatic sexual differentiation. Acts as a dominant factor that regulates the mRNA splicing of transformer (tra) and doublesex (dsx) transcripts and promotes expression of male splice forms of tra and dsx. Probably acts as a component of the spliceosome C complex required for mRNA splicing factor and exon-junction complex (EJC) assembly. Hinders eIF4AIII from non-specifically binding RNA and escorts it to the splicing machinery to promote EJC assembly on mature mRNAs. The chain is Male determiner protein Mdmd(Y) from Musca domestica (House fly).